The following is a 537-amino-acid chain: Eukaryotic translation initiation factor 3 subunit L (537 aa).

The segment covering 1–19 (MSRRVEFDMSHEDHTDRRR) has biased composition (basic and acidic residues). The interval 1-28 (MSRRVEFDMSHEDHTDRRRTNTFSSEED) is disordered. Residues 297–485 (EATKMFVNCL…GPSTVDDDEP (189 aa)) form the PCI domain.

It belongs to the eIF-3 subunit L family. Component of the eukaryotic translation initiation factor 3 (eIF-3) complex.

Its subcellular location is the cytoplasm. Its function is as follows. Component of the eukaryotic translation initiation factor 3 (eIF-3) complex, which is involved in protein synthesis of a specialized repertoire of mRNAs and, together with other initiation factors, stimulates binding of mRNA and methionyl-tRNAi to the 40S ribosome. The eIF-3 complex specifically targets and initiates translation of a subset of mRNAs involved in cell proliferation. The chain is Eukaryotic translation initiation factor 3 subunit L from Caenorhabditis briggsae.